Here is a 263-residue protein sequence, read N- to C-terminus: Sulfur carrier protein FdhD (263 aa).

The active-site Cysteine persulfide intermediate is the Cys107.

It belongs to the FdhD family.

It is found in the cytoplasm. Its function is as follows. Required for formate dehydrogenase (FDH) activity. Acts as a sulfur carrier protein that transfers sulfur from IscS to the molybdenum cofactor prior to its insertion into FDH. This is Sulfur carrier protein FdhD from Bacillus licheniformis (strain ATCC 14580 / DSM 13 / JCM 2505 / CCUG 7422 / NBRC 12200 / NCIMB 9375 / NCTC 10341 / NRRL NRS-1264 / Gibson 46).